We begin with the raw amino-acid sequence, 121 residues long: Large ribosomal subunit protein bL20 (121 aa).

It belongs to the bacterial ribosomal protein bL20 family.

Its function is as follows. Binds directly to 23S ribosomal RNA and is necessary for the in vitro assembly process of the 50S ribosomal subunit. It is not involved in the protein synthesizing functions of that subunit. This is Large ribosomal subunit protein bL20 from Chlamydia caviae (strain ATCC VR-813 / DSM 19441 / 03DC25 / GPIC) (Chlamydophila caviae).